The chain runs to 590 residues: Fucose-1-phosphate guanylyltransferase (590 aa).

As to expression, expressed at highest levels in brain, moderately in testis, ovary and kidney, and weakly in liver, spleen, heart and lung.

It is found in the cytoplasm. The enzyme catalyses beta-L-fucose 1-phosphate + GTP + H(+) = GDP-beta-L-fucose + diphosphate. In terms of biological role, catalyzes the formation of GDP-L-fucose from GTP and L-fucose-1-phosphate. Functions as a salvage pathway to reutilize L-fucose arising from the turnover of glycoproteins and glycolipids. The polypeptide is Fucose-1-phosphate guanylyltransferase (Mus musculus (Mouse)).